The chain runs to 313 residues: tRNA dimethylallyltransferase (313 aa).

Residue Gly-11–Thr-18 coordinates ATP. Thr-13–Thr-18 provides a ligand contact to substrate. 3 interaction with substrate tRNA regions span residues Asp-36–Leu-39, Gln-160–Arg-164, and Arg-243–Arg-248.

Belongs to the IPP transferase family. Monomer. It depends on Mg(2+) as a cofactor.

It catalyses the reaction adenosine(37) in tRNA + dimethylallyl diphosphate = N(6)-dimethylallyladenosine(37) in tRNA + diphosphate. Its function is as follows. Catalyzes the transfer of a dimethylallyl group onto the adenine at position 37 in tRNAs that read codons beginning with uridine, leading to the formation of N6-(dimethylallyl)adenosine (i(6)A). The chain is tRNA dimethylallyltransferase from Neisseria meningitidis serogroup C (strain 053442).